The following is a 311-amino-acid chain: MADVINVSVNLEAFSQAISAIQALRSSVSRVFDCLKDGMRNKETLEGREKAFIAHFQDNLHSVNRDLNELERLSNLVGKPSENHPLHNSGLLSLDPVQDKTPLYSQLLQAYKWSNKLQYHAGLASGLLNQQSLKRSANQMGVSAKRRPKAQPTTLVLPPQYVDDVISRIDRMFPEMSIHLSRPNGTSAMLLVTLGKVLKVIVVMRSLFIDRTIVKGYNENVYTEDGKLDIWSKSNYQVFQKVTDHATTALLHYQLPQMPDVVVRSFMTWLRSYIKLFQAPCQRCGKFLQDGLPPTWRDFRTLEAFHDTCRQ.

The residue at position 132 (Ser-132) is a Phosphoserine. Lys-134 carries the N6-methyllysine modification.

This sequence belongs to the Mediator complex subunit 27 family. As to quaternary structure, component of the Mediator complex, which is composed of MED1, MED4, MED6, MED7, MED8, MED9, MED10, MED11, MED12, MED13, MED13L, MED14, MED15, MED16, MED17, MED18, MED19, MED20, MED21, MED22, MED23, MED24, MED25, MED26, MED27, MED29, MED30, MED31, CCNC, CDK8 and CDC2L6/CDK11. The MED12, MED13, CCNC and CDK8 subunits form a distinct module termed the CDK8 module. Mediator containing the CDK8 module is less active than Mediator lacking this module in supporting transcriptional activation. Individual preparations of the Mediator complex lacking one or more distinct subunits have been variously termed ARC, CRSP, DRIP, PC2, SMCC and TRAP.

It is found in the nucleus. Functionally, component of the Mediator complex, a coactivator involved in the regulated transcription of nearly all RNA polymerase II-dependent genes. Mediator functions as a bridge to convey information from gene-specific regulatory proteins to the basal RNA polymerase II transcription machinery. Mediator is recruited to promoters by direct interactions with regulatory proteins and serves as a scaffold for the assembly of a functional preinitiation complex with RNA polymerase II and the general transcription factors. The chain is Mediator of RNA polymerase II transcription subunit 27 (MED27) from Homo sapiens (Human).